A 151-amino-acid polypeptide reads, in one-letter code: Succinate dehydrogenase subunit 4, mitochondrial (151 aa).

The N-terminal 78 residues, 1–78 (MSLRRTILDL…RSISSSIGQS (78 aa)), are a transit peptide targeting the mitochondrion. His-109 contacts heme. Tyr-121 contacts a ubiquinone. Residues 130–150 (LIVMSLGLFQIIVLKDIILFL) traverse the membrane as a helical segment.

Component of complex II composed of eight subunits in plants: four classical SDH subunits SDH1, SDH2, SDH3 and SDH4 (a flavoprotein (FP), an iron-sulfur protein (IP), and a cytochrome b composed of a large and a small subunit.), as well as four subunits unknown in mitochondria from bacteria and heterotrophic eukaryotes. Heme serves as cofactor. In terms of tissue distribution, expressed in flowers, inflorescences and stems.

It is found in the mitochondrion inner membrane. It functions in the pathway carbohydrate metabolism; tricarboxylic acid cycle. Functionally, membrane-anchoring subunit of succinate dehydrogenase (SDH). This Arabidopsis thaliana (Mouse-ear cress) protein is Succinate dehydrogenase subunit 4, mitochondrial.